The following is a 359-amino-acid chain: Protein PAM71-homolog, chloroplastic (359 aa).

The N-terminal 66 residues, 1–66 (MKLTSLSKNA…DLLWGKFRVR (66 aa)), are a transit peptide targeting the chloroplast. The interval 71 to 102 (GVGSGSYSGGEEDGSQSSSLDQSPATSSESLK) is disordered. Residues 85–98 (SQSSSLDQSPATSS) show a composition bias toward low complexity. Helical transmembrane passes span 110 to 130 (SLSI…ITFV), 149 to 169 (AFSL…AALL), 177 to 197 (LVLL…VVIG), 207 to 227 (FQTT…FFGL), 269 to 289 (LTNP…AEWG), 311 to 331 (GAIA…AFLA), and 339 to 359 (VGYV…FGVF).

The protein belongs to the GDT1 family.

The protein localises to the plastid. It is found in the chloroplast membrane. In terms of biological role, probable chloroplast-localized Mn(2+)/H(+) and/or Ca(2+)/H(+) antiporter regulating Ca(2+), Mn(2+) and pH homeostasis. This Arabidopsis thaliana (Mouse-ear cress) protein is Protein PAM71-homolog, chloroplastic.